We begin with the raw amino-acid sequence, 717 residues long: Probable metal-nicotianamine transporter YSL12 (717 aa).

A disordered region spans residues 1-56 (MASHANASGGGGDEEMVEASTLRHRHGAGKDANGVGTERQLAAAAAEGEEEGPSSV). The next 14 membrane-spanning stretches (helical) occupy residues 76-96 (AFVV…KLNL), 99-119 (GIIP…VRLW), 144-164 (CVVA…LFGM), 186-206 (IGWM…ALVP), 248-268 (LGKF…YTAG), 306-326 (IVNV…WPLI), 351-371 (VFIS…KVLI), 422-442 (VAFG…PQIF), 450-470 (ILVA…GAGL), 482-502 (LAIF…LVGL), 536-556 (FVSQ…VFWL), 593-613 (LPKH…AINL), 636-656 (FYIG…LFVW), and 671-691 (VASG…ILAL).

It belongs to the YSL (TC 2.A.67.2) family. As to expression, expressed in root cortex and stele.

The protein localises to the membrane. Functionally, may be involved in the transport of nicotianamine-chelated metals. The polypeptide is Probable metal-nicotianamine transporter YSL12 (YSL12) (Oryza sativa subsp. japonica (Rice)).